The sequence spans 487 residues: 2-succinylbenzoate--CoA ligase (487 aa).

This sequence belongs to the ATP-dependent AMP-binding enzyme family. MenE subfamily.

It catalyses the reaction 2-succinylbenzoate + ATP + CoA = 2-succinylbenzoyl-CoA + AMP + diphosphate. It functions in the pathway quinol/quinone metabolism; 1,4-dihydroxy-2-naphthoate biosynthesis; 1,4-dihydroxy-2-naphthoate from chorismate: step 5/7. The protein operates within quinol/quinone metabolism; menaquinone biosynthesis. Converts 2-succinylbenzoate (OSB) to 2-succinylbenzoyl-CoA (OSB-CoA). The polypeptide is 2-succinylbenzoate--CoA ligase (Bacillus velezensis (strain DSM 23117 / BGSC 10A6 / LMG 26770 / FZB42) (Bacillus amyloliquefaciens subsp. plantarum)).